A 78-amino-acid polypeptide reads, in one-letter code: Small ribosomal subunit protein bS18B (78 aa).

This sequence belongs to the bacterial ribosomal protein bS18 family. As to quaternary structure, part of the 30S ribosomal subunit. Forms a tight heterodimer with protein bS6.

Binds as a heterodimer with protein bS6 to the central domain of the 16S rRNA, where it helps stabilize the platform of the 30S subunit. The polypeptide is Small ribosomal subunit protein bS18B (Streptomyces griseus subsp. griseus (strain JCM 4626 / CBS 651.72 / NBRC 13350 / KCC S-0626 / ISP 5235)).